We begin with the raw amino-acid sequence, 422 residues long: MANARSLVAKANNINVGSLILMALVFGSCVANGEYLGGRRGLAANSGNPTVYDITKFGAVGDGSTNTFKAFLNTWIQVCDSPVPATLLVPKGTFLAGPVIFAGPCKSKVTVNVIGTIIATTSGYATPEWFLFERVDNLVLTGTGTFHGKGEAVWKADGCGKKVQCNLPPTSLKFRNMKNVEINGISSVNAKAFHMFLVKTENVNIQNIKLTAPAESPNTDGIHLSNADNVSILDSTIATGDDCVSVGRGSNNVTVERVICGPGHGLSVGSLGKYKNEEDVSGIHVNNCTMIETDNGLRIKTWGGSDPSKAVDIKFENIIMQSVKNPIIIDQNYGSRGGDSQVAISDILFKNIRGTTITKDVVQIMCSKSVPCQGVNVVDVNLDYVGKTGGEKKSSSGGLVGALCDNANVIFGGKLSFPMCPK.

The N-terminal stretch at 1–31 is a signal peptide; sequence MANARSLVAKANNINVGSLILMALVFGSCVA. 5 PbH1 repeats span residues 200–226, 227–248, 250–270, 280–301, and 310–331; these read TENV…HLSN, ADNV…SVGR, SNNV…SVGS, VSGI…RIKT, and AVDI…IIDQ. N-linked (GlcNAc...) asparagine glycosylation occurs at asparagine 229. Aspartate 241 functions as the Proton donor in the catalytic mechanism. Cysteine 243 and cysteine 260 form a disulfide bridge. The N-linked (GlcNAc...) asparagine glycan is linked to asparagine 252. The active site involves histidine 264. Asparagine 287 carries N-linked (GlcNAc...) asparagine glycosylation. 2 cysteine pairs are disulfide-bonded: cysteine 366/cysteine 372 and cysteine 404/cysteine 420.

This sequence belongs to the glycosyl hydrolase 28 family.

It localises to the secreted. It is found in the cell wall. The catalysed reaction is [(1-&gt;4)-alpha-D-galacturonosyl](n) + H2O = alpha-D-galacturonate + [(1-&gt;4)-alpha-D-galacturonosyl](n-1). May function in depolymerizing pectin during pollen development, germination, and tube growth. Acts as an exo-polygalacturonase. In Arabidopsis thaliana (Mouse-ear cress), this protein is Exopolygalacturonase clone GBGE184 (PGA3).